We begin with the raw amino-acid sequence, 369 residues long: Bi-functional coumaroyl CoA and feruloyl CoA ortho-hydroxylase Diox2 (369 aa).

One can recognise a Fe2OG dioxygenase domain in the interval 215-318; the sequence is GSRRVNLNYY…RISVPLFVNP (104 aa). Tyrosine 224 contributes to the 2-oxoglutarate binding site. Fe cation is bound by residues histidine 239, aspartate 241, and histidine 299. Arginine 309 and serine 311 together coordinate 2-oxoglutarate.

It belongs to the iron/ascorbate-dependent oxidoreductase family. It depends on L-ascorbate as a cofactor. The cofactor is Fe(2+).

The enzyme catalyses (E)-4-coumaroyl-CoA + 2-oxoglutarate + O2 = (E)-2,4-dihydroxycinnamoyl-CoA + succinate + CO2. It carries out the reaction (E)-feruloyl-CoA + 2-oxoglutarate + O2 = (E)-6-hydroxyferuloyl-CoA + succinate + CO2. It participates in phenylpropanoid metabolism. 2-oxoglutarate (OG)- and Fe(II)-dependent dioxygenase (2OGD) involved in scopoletin and umbelliferone biosynthesis. Converts feruloyl CoA into 6'-hydroxyferuloyl CoA, and p-coumaroyl CoA into 2,4-dihydroxycinnamoyl-CoA. This Ruta graveolens (Common rue) protein is Bi-functional coumaroyl CoA and feruloyl CoA ortho-hydroxylase Diox2.